The sequence spans 99 residues: MAEKDIDKLLSLTDSKYRLSVVIAKRALQLRSGAPSVLPVEQRVRTRNLVTQAMRELATGKLTVGTGLMDENRFHQDYVRQKQAQLQAQLNAERERERD.

The protein belongs to the RNA polymerase subunit omega family. The RNAP catalytic core consists of 2 alpha, 1 beta, 1 beta' and 1 omega subunit. When a sigma factor is associated with the core the holoenzyme is formed, which can initiate transcription.

It carries out the reaction RNA(n) + a ribonucleoside 5'-triphosphate = RNA(n+1) + diphosphate. In terms of biological role, promotes RNA polymerase assembly. Latches the N- and C-terminal regions of the beta' subunit thereby facilitating its interaction with the beta and alpha subunits. The chain is DNA-directed RNA polymerase subunit omega from Deinococcus geothermalis (strain DSM 11300 / CIP 105573 / AG-3a).